The primary structure comprises 770 residues: MPKGRQKVPHLDAHLGLPICLWLELAIFFLVPQVMGLSEAGGLDILGTGGLSWAVHLDSLEGERKEESLTQQADAVAQAAGLVNAGRIGELQGHYLFVQPTGHRQAMEVEAMRQQAEAVLARHEAVRWHSEQTLLKRAKRSIHFNDPKYPQQWHLNNRRSPGRDINVTGVWERNVTGRGVTVVVVDDGVEHTVQDIAPNYSPEGSYDLNSNDPDPMPHPDEENGNHHGTRCAGEIAAVPNNSFCAVGVAYGSRIAGIRVLDGPLTDSMEAVAFNKHYQINDIYSCSWGPDDDGKTVDGPHQLGKAALQHGVMAGRQGFGSIFVVASGNGGQHNDNCNYDGYANSIYTVTIGAVDEEGRMPFYAEECASMLAVTFSGGDKMLRSIVTTDWDLQKGTGCTEGHTGTSAAAPLAAGMIALMLQVRPCLTWRDVQHIIVFTAIQYEDHHADWLTNEAGFSHSHQHGFGLLNAWRLVNAAKIWTSVPYLASYVSPMLKENKAVPRSPHSLEVLWNVSRTDLEMSGLKTLEHVAVTVSITHPRRGSLELKLFCPSGMMSLIGAPRSMDSDPNGFNAWTFSTVRCWGERARGVYRLVIRDVGDEPLQMGILQQWQLTLYGSMWSPVDIKDRQSLLESAMSGKYLHDGFTLPCPPGLKIPEEDGYTITPNTLKTLVLVGCFSVFWTIYYMLEVCLSQRNKASTHGCRKGCCPWAPRRQNSKDAGTALESMPLCSSKDLDGVDSEHGDCTTASSFLAPELDCPPHQPPDLLQGKSGQIC.

A signal peptide spans 1–36; sequence MPKGRQKVPHLDAHLGLPICLWLELAIFFLVPQVMG. The propeptide occupies 37-140; it reads LSEAGGLDIL…EQTLLKRAKR (104 aa). Residues 141-666 lie on the Extracellular side of the membrane; sequence SIHFNDPKYP…YTITPNTLKT (526 aa). One can recognise a Peptidase S8 domain in the interval 152–472; that stretch reads QWHLNNRRSP…FGLLNAWRLV (321 aa). Asn-166 and Asn-174 each carry an N-linked (GlcNAc...) asparagine glycan. Asp-186 serves as the catalytic Charge relay system. Positions 195-228 are disordered; sequence DIAPNYSPEGSYDLNSNDPDPMPHPDEENGNHHG. Residues 215–225 show a composition bias toward basic and acidic residues; sequence PMPHPDEENGN. His-227 serves as the catalytic Charge relay system. N-linked (GlcNAc...) asparagine glycosylation is present at Asn-240. The active-site Charge relay system is Ser-405. The 138-residue stretch at 480-617 folds into the P/Homo B domain; the sequence is SVPYLASYVS…QLTLYGSMWS (138 aa). A glycan (N-linked (GlcNAc...) asparagine) is linked at Asn-510. The chain crosses the membrane as a helical span at residues 667–687; the sequence is LVLVGCFSVFWTIYYMLEVCL. Residues 688-770 are Cytoplasmic-facing; the sequence is SQRNKASTHG…LLQGKSGQIC (83 aa).

This sequence belongs to the peptidase S8 family. It depends on Ca(2+) as a cofactor. Widely expressed. Expressed in brain, lung, muscle, heart, liver, kidney, spleen and thymus.

It localises to the golgi apparatus. The protein resides in the trans-Golgi network membrane. Its activity is regulated as follows. Inhibited by zinc and copper. Serine endoprotease that processes various proproteins by cleavage at paired basic amino acids, recognizing the RXXX[KR]R consensus motif. Likely functions in the constitutive secretory pathway. The sequence is that of Proprotein convertase subtilisin/kexin type 7 (Pcsk7) from Mus musculus (Mouse).